Consider the following 59-residue polypeptide: Large ribosomal subunit protein uL30 (59 aa).

This sequence belongs to the universal ribosomal protein uL30 family. Part of the 50S ribosomal subunit.

The protein is Large ribosomal subunit protein uL30 of Listeria welshimeri serovar 6b (strain ATCC 35897 / DSM 20650 / CCUG 15529 / CIP 8149 / NCTC 11857 / SLCC 5334 / V8).